A 119-amino-acid polypeptide reads, in one-letter code: Large ribosomal subunit protein uL18 (119 aa).

Basic and acidic residues predominate over residues 1-10; the sequence is MKKIKEAEQR. A disordered region spans residues 1-20; that stretch reads MKKIKEAEQRKLRRKKRIKD.

The protein belongs to the universal ribosomal protein uL18 family. In terms of assembly, part of the 50S ribosomal subunit; part of the 5S rRNA/L5/L18/L25 subcomplex. Contacts the 5S and 23S rRNAs.

This is one of the proteins that bind and probably mediate the attachment of the 5S RNA into the large ribosomal subunit, where it forms part of the central protuberance. This chain is Large ribosomal subunit protein uL18, found in Borreliella burgdorferi (strain ATCC 35210 / DSM 4680 / CIP 102532 / B31) (Borrelia burgdorferi).